The chain runs to 222 residues: MPCRIAIDGPAGSGKTTVAKILADKLGIYYLDTGAMYRIIGLYLDKKGVENDSDIERELSTIKLEFINGDFYINGKRVGDEIRTPYAGICASKYAKKAIVREFLTRIQQKISKNENIVVEGRDIGTVVIPDAEVKIFLVASAEERAKRRYKELLDKGVKVSYEEVLNEIILRDKQDTEREIAPLRQPDDAVLIDSTKYTIEEVINKILEVVLEKCKLKLQKE.

9-17 (GPAGSGKTT) contacts ATP.

The protein belongs to the cytidylate kinase family. Type 1 subfamily.

The protein localises to the cytoplasm. The enzyme catalyses CMP + ATP = CDP + ADP. The catalysed reaction is dCMP + ATP = dCDP + ADP. The sequence is that of Cytidylate kinase from Thermosipho africanus (strain TCF52B).